A 139-amino-acid chain; its full sequence is Putative pre-16S rRNA nuclease (139 aa).

The protein belongs to the YqgF nuclease family.

The protein localises to the cytoplasm. Its function is as follows. Could be a nuclease involved in processing of the 5'-end of pre-16S rRNA. The sequence is that of Putative pre-16S rRNA nuclease from Streptococcus equi subsp. zooepidemicus (strain H70).